The following is a 641-amino-acid chain: MPAITLPDGSRREFDHPVTVRDVAESIGKGLARAALAGRVDGRLVDLSHRIDDDVQLEIVTDRDPDGVDMIRHSTAHLMAQAVKELFPEAQVTIGPVIENGFYYDFAYKRPFTEDDLKAIEKKMEELARQDFEVHREVWDRDEAIRFFLEQGEQYKAEIIEDLPEHETISVYKQGDFLDLCRGPHVPNTGKLKAFKLQKVAGAYWRGKSDNEMLQRIYGTAWPDKKQLKAYLHRLAEAEKRDHRRIGRAQNLFHLQEEAPGMAFWHPKGWQIYLEVQEYIRRLTRGHGYQEIHTPQLVDRSLWEKSGHWDKFQDNMFITESESRDYAVKPMNCPCHVQVYNQGLKSYRDLPLRLAEFGSCHRNEPSGTLHGLMRVRNFVQDDAHIFCTEDQIQQEVADFIDLVFKAYNDFGFDDVIIALSTRPDERVGEDALWDKAEHALEEALNRAGLEWQLQPGEGAFYGPKIEFTLKDCLGRTWQLGTIQVDFSMPGRLGATYVAEDGSKKVPVMLHRAILGSLERFIGILIEHYAGALPPWLAPVQAVVLNITDRQGEYARRIEKRFRERGLRVDADLRNEKIGFKIREHTLQKVPYMLVVGDKEVENNTVAVRTREGQDLGSMAVDDFLQRLESEIARLGRSNSED.

One can recognise a TGS domain in the interval M1–T61. A catalytic region spans residues D242–P533. The Zn(2+) site is built by C333, H384, and H510.

Belongs to the class-II aminoacyl-tRNA synthetase family. As to quaternary structure, homodimer. It depends on Zn(2+) as a cofactor.

The protein resides in the cytoplasm. It catalyses the reaction tRNA(Thr) + L-threonine + ATP = L-threonyl-tRNA(Thr) + AMP + diphosphate + H(+). Its function is as follows. Catalyzes the attachment of threonine to tRNA(Thr) in a two-step reaction: L-threonine is first activated by ATP to form Thr-AMP and then transferred to the acceptor end of tRNA(Thr). Also edits incorrectly charged L-seryl-tRNA(Thr). This chain is Threonine--tRNA ligase, found in Alkalilimnicola ehrlichii (strain ATCC BAA-1101 / DSM 17681 / MLHE-1).